A 927-amino-acid polypeptide reads, in one-letter code: Band 3 anion transport protein (927 aa).

Residue Met-1 is modified to N-acetylmethionine. The Cytoplasmic portion of the chain corresponds to 1-420; sequence MGDMQDHEKV…LSDITDALSP (420 aa). Position 18 is a phosphoserine (Ser-18). A phosphotyrosine mark is found at Tyr-31 and Tyr-56. The tract at residues 69 to 303 is globular; the sequence is SQVYVELQEL…LGRAAATLMT (235 aa). The interaction with ANK1 stretch occupies residues 190–199; it reads AVLTRSGAPS. Phosphoserine occurs at positions 199 and 222. The segment at 317–370 is dimerization arm; the sequence is RGELLSSLDSFLDCSLVLPPTEAPSEKALLNLVPVQKELLRKRYLPRPAKPDPN. The segment at 367–390 is disordered; it reads PDPNLYEALDGGKEGPGDEDDPLR. At Tyr-372 the chain carries Phosphotyrosine. A helical membrane pass occupies residues 421–444; that stretch reads QVLAAVIFIYFAALSPAVTFGGLL. At 445–452 the chain is on the extracellular side; the sequence is GEKTRNLM. Residues 453–473 form a helical membrane-spanning segment; sequence GVSELLISTAVQGILFALLGA. The Cytoplasmic segment spans residues 474 to 476; that stretch reads QPL. The chain crosses the membrane as a discontinuously helical span at residues 477 to 493; that stretch reads LVLGFSGPLLVFEEAFY. Residues 494 to 502 lie on the Extracellular side of the membrane; that stretch reads SFCESNNLE. Residues 503–523 traverse the membrane as a helical segment; sequence YIVGRAWIGFWLILLVVLVVA. Over 524 to 535 the chain is Cytoplasmic; the sequence is FEGSFLVQYISR. A helical transmembrane segment spans residues 536-558; that stretch reads YTQEIFSFLISLIFIYETFSKLI. The Extracellular portion of the chain corresponds to 559-586; it reads KIFQDYPLQESYAPVVMKPKPQGPVPNT. Residues 587 to 607 form a helical membrane-spanning segment; that stretch reads ALLSLVLMVGTFLLAMMLRKF. The Cytoplasmic portion of the chain corresponds to 608–618; that stretch reads KNSTYFPGKLR. Residues 619 to 639 form a helical membrane-spanning segment; sequence RVIGDFGVPISILIMVLVDTF. The Extracellular segment spans residues 640-679; sequence IKNTYTQKLSVPDGLKVSNSSARGWVIHPLGLYNHFPKWM. N-linked (GlcNAc...) asparagine glycosylation occurs at Asn-658. Residues 680-700 traverse the membrane as a helical segment; that stretch reads MFASVLPALLVFILIFLESQI. Residues 701-716 are Cytoplasmic-facing; that stretch reads TTLIVSKPERKMIKGS. A helical membrane pass occupies residues 717-735; the sequence is GFHLDLLLVVGMGGVAALF. A discontinuously helical transmembrane segment spans residues 736-753; it reads GMPWLSATTVRSVTHANA. The Cytoplasmic portion of the chain corresponds to 754 to 776; that stretch reads LTVMGKASGPGAAAQIQEVKEQR. 2 helical membrane passes run 777–797 and 798–816; these read ISGLLVSVLVGLSILMEPILS and RIPLAVLFGIFLYMGITSL. Residues 817 to 854 lie on the Cytoplasmic side of the membrane; it reads SGIQLFDRILLLFKPPKYHPDVPFVKRVKTWRMHLFTG. The discontinuously helical intramembrane region spans 855-885; the sequence is IQIICLAVLWVVKSTPASLALPFVLILTVPL. Cys-859 carries the S-palmitoyl cysteine lipid modification. Residues 886–927 lie on the Cytoplasmic side of the membrane; the sequence is RRLLLPLIFRELELQCLDGDDAKVTFDEAEGLDEYDEVPMPV. Tyr-920 is modified (phosphotyrosine).

This sequence belongs to the anion exchanger (TC 2.A.31) family. A dimer in solution, but in its membrane environment, it exists primarily as a mixture of dimers and tetramers and spans the membrane asymmetrically. Component of the ankyrin-1 complex in the erythrocyte, composed of ANK1, RHCE, RHAG, SLC4A1, EPB42, GYPA, GYPB and AQP1. Interacts with STOM; this interaction positively regulates SLC4A1 activity. Interacts with GYPA; a GYPA monomer is bound at each end of the SLC4A1 dimer forming a heterotetramer. Three SLC4A1 dimers (Band 3-I, Band 3-II and Band 3-III) participates in the ankyrin-1 complex. Interacts (via the cytoplasmic domain) with EPB42; this interaction is mediated by the SLC4A1 Band 3-I dimer. Interacts (via the cytoplasmic domain) directly with ANK1; this interaction is mediated by the SLC4A1 Band 3-II and Band 3-III dimers. In terms of assembly, interacts with TMEM139. In terms of tissue distribution, kidney.

It localises to the cell membrane. Its subcellular location is the basolateral cell membrane. The enzyme catalyses hydrogencarbonate(in) + chloride(out) = hydrogencarbonate(out) + chloride(in). Functions both as a transporter that mediates electroneutral anion exchange across the cell membrane and as a structural protein. Component of the ankyrin-1 complex of the erythrocyte membrane; required for normal flexibility and stability of the erythrocyte membrane and for normal erythrocyte shape via the interactions of its cytoplasmic domain with cytoskeletal proteins, glycolytic enzymes, and hemoglobin. Functions as a transporter that mediates the 1:1 exchange of inorganic anions across the erythrocyte membrane. Mediates chloride-bicarbonate exchange in the kidney, and is required for normal acidification of the urine. The sequence is that of Band 3 anion transport protein from Rattus norvegicus (Rat).